A 439-amino-acid chain; its full sequence is Magnesium-dependent glutamate N-prenyltransferase (439 aa).

Residues Asn322, Thr326, Glu330, and Phe337 each coordinate Mg(2+).

It belongs to the terpene synthase family. The cofactor is Mg(2+).

It carries out the reaction dimethylallyl diphosphate + L-glutamate = prekainate + diphosphate. Its pathway is secondary metabolite biosynthesis. Magnesium-dependent glutamate N-prenyltransferase: part of the gene cluster that mediates the biosynthesis of kainic acid (KA) and derivatives, natural products with neurochemical activity acting as ionotropic glutamate receptor (iGluR) agonists, thus being neurotoxins. Catalyzes the conversion of L-glutamic acid (L-Glu) to prekainic acid in the presence of dimethylallyl diphosphate (DMAPP). Can also use geranyl diphosphate (GPP) as substrate, thus leading to the formation of N-geranyl-L-glutamic acid (L-NGG). The chain is Magnesium-dependent glutamate N-prenyltransferase from Digenea simplex (Marine red alga).